A 599-amino-acid chain; its full sequence is Sulfite reductase [NADPH] flavoprotein alpha-component (599 aa).

The region spanning 64–202 (ITIISASQTG…AASEWRARVV (139 aa)) is the Flavodoxin-like domain. FMN-binding positions include 70 to 75 (SQTGNA), 117 to 120 (STQG), and 153 to 162 (LGDSSYEFFC). Residues 234–448 (DAPLVASLSV…IEHNDNFRLP (215 aa)) enclose the FAD-binding FR-type domain. Residues Thr322, Ala356, 386-389 (RLYS), 404-406 (TVG), Tyr410, and 419-422 (GGAS) contribute to the FAD site. NADP(+) contacts are provided by residues 519-520 (SR), 525-529 (KVYVQ), and Asp561. Tyr599 is an FAD binding site.

The protein belongs to the NADPH-dependent sulphite reductase flavoprotein subunit CysJ family. In the N-terminal section; belongs to the flavodoxin family. This sequence in the C-terminal section; belongs to the flavoprotein pyridine nucleotide cytochrome reductase family. As to quaternary structure, alpha(8)-beta(8). The alpha component is a flavoprotein, the beta component is a hemoprotein. Requires FAD as cofactor. It depends on FMN as a cofactor.

The catalysed reaction is hydrogen sulfide + 3 NADP(+) + 3 H2O = sulfite + 3 NADPH + 4 H(+). Its pathway is sulfur metabolism; hydrogen sulfide biosynthesis; hydrogen sulfide from sulfite (NADPH route): step 1/1. Its function is as follows. Component of the sulfite reductase complex that catalyzes the 6-electron reduction of sulfite to sulfide. This is one of several activities required for the biosynthesis of L-cysteine from sulfate. The flavoprotein component catalyzes the electron flow from NADPH -&gt; FAD -&gt; FMN to the hemoprotein component. This Shigella boydii serotype 4 (strain Sb227) protein is Sulfite reductase [NADPH] flavoprotein alpha-component.